A 162-amino-acid chain; its full sequence is SsrA-binding protein (162 aa).

This sequence belongs to the SmpB family.

The protein resides in the cytoplasm. Required for rescue of stalled ribosomes mediated by trans-translation. Binds to transfer-messenger RNA (tmRNA), required for stable association of tmRNA with ribosomes. tmRNA and SmpB together mimic tRNA shape, replacing the anticodon stem-loop with SmpB. tmRNA is encoded by the ssrA gene; the 2 termini fold to resemble tRNA(Ala) and it encodes a 'tag peptide', a short internal open reading frame. During trans-translation Ala-aminoacylated tmRNA acts like a tRNA, entering the A-site of stalled ribosomes, displacing the stalled mRNA. The ribosome then switches to translate the ORF on the tmRNA; the nascent peptide is terminated with the 'tag peptide' encoded by the tmRNA and targeted for degradation. The ribosome is freed to recommence translation, which seems to be the essential function of trans-translation. The chain is SsrA-binding protein from Granulibacter bethesdensis (strain ATCC BAA-1260 / CGDNIH1).